Reading from the N-terminus, the 627-residue chain is MIYNNTYDVIVVGGGHAGVEAAAASARIGAKTLLLTHNIDTIGQMSCNPAIGGIGKGHLVKEIDAMGGIMAKAIDMAGIQFRILNSRKGPAVRATRAQADRVLYKKAINSLLNDQENLDIFQDSVDDLVVENDTVCGVITKTGIIFKSKKVVLTVGTFLGGKIHIGQVSKEGGRAGDQPSNALAARLRALPFRVDRLKTGTPPRIDSRSVDFSVMDVQHGDTPTPYFSFFSKGKIEHPRQIPCYITYTNSKTHEIITNNLDKSAMYSGLIEGIGPRYCPSIEDKVVRFAEKDRHQIFVEPEGLNSIELYPNGLSTSLPFEVQCEYIRSIKGFENAFIMRPGYAIEYDFFDPRDLKPTLETKHIKNLFFAGQINGTTGYEEAGAQGLVAGINAAISIDSDKSWYPTRSNSYMGVLIDDLITKGTKEPYRMFTSRAEYRLILREDNADLRLSDKACELGLLNKQDQEIFINKKTAIDENIAIMKNTWIGPQTQKARDLEKFLDKKMTRESTLFDLLKRPELDYKKLQQIPDTNLKLEDESVIEQIEISAKYSGYIERQSKDIAKISTLESKTIPESFDYSQVKGLSNEVLQKLSEQKPTTLGEASRIPGVTPAAVSLLTIYMKKTGFIK.

Residues 13 to 18 (GGGHAG), Val-125, and Ser-180 each bind FAD. NAD(+) is bound at residue 274–288 (GPRYCPSIEDKVVRF). Gln-371 is an FAD binding site.

It belongs to the MnmG family. Homodimer. Heterotetramer of two MnmE and two MnmG subunits. FAD serves as cofactor.

Its subcellular location is the cytoplasm. NAD-binding protein involved in the addition of a carboxymethylaminomethyl (cmnm) group at the wobble position (U34) of certain tRNAs, forming tRNA-cmnm(5)s(2)U34. In Francisella philomiragia subsp. philomiragia (strain ATCC 25017 / CCUG 19701 / FSC 153 / O#319-036), this protein is tRNA uridine 5-carboxymethylaminomethyl modification enzyme MnmG.